The primary structure comprises 153 residues: Proline-rich membrane anchor 1 (153 aa).

The N-terminal stretch at 1-35 (MLLRDLVLRHGCCWPSLLLHCALHPLWGLVQVTHA) is a signal peptide. Residues 36–92 (EPQKSCSKVTDSCQHICQCRPPPPLPPPPPPPPPPRLLSAPAPNSTSCPAEDSWWSG) lie on the Extracellular side of the membrane. The 15-residue stretch at 56–70 (PPPPLPPPPPPPPPP) folds into the PRAD domain. The span at 59-71 (PLPPPPPPPPPPR) shows a compositional bias: pro residues. The segment at 59 to 79 (PLPPPPPPPPPPRLLSAPAPN) is disordered. The N-linked (GlcNAc...) asparagine glycan is linked to Asn79. A helical membrane pass occupies residues 93–113 (LVIIVAVVCASLVFLTVLVII). Topologically, residues 114–153 (CYKAIKRKPLRKDENGASVAEYPMSSSPSNKGVDVNAAVV) are cytoplasmic. Residues 133–153 (AEYPMSSSPSNKGVDVNAAVV) form a disordered region.

Interacts with ACHE, probably through disulfide bonds. Isoforms 1 and 2 are expressed in the adult brain. In matured cortical neurons, only isoform 1 is detectable.

The protein resides in the cell membrane. Its subcellular location is the cell junction. The protein localises to the synapse. In terms of biological role, required to anchor acetylcholinesterase (ACHE) to the basal lamina of the neuromuscular junction and to the membrane of neuronal synapses in brain. Organizes ACHE into tetramers. This Rattus norvegicus (Rat) protein is Proline-rich membrane anchor 1 (Prima1).